The following is a 79-amino-acid chain: UPF0180 protein BCG9842_B3897 (79 aa).

Belongs to the UPF0180 family.

In Bacillus cereus (strain G9842), this protein is UPF0180 protein BCG9842_B3897.